The following is a 246-amino-acid chain: MSLPYRHVVILTGAGISAESGIQTFRAQDGLWENHRIEDVATPEGFQRDPDMVLEFYNQRRRKLLSDAIQPNPAHLALGKLEKELQGSVTVITQNIDNLHERGGSQNIIHMHGELLKARCPESNQTVEQKEDIRHGDLCHCCQMPAQMRPHIVWFGEMPLRMGDIYAALEQADLFVSIGTSGVVYPAAGFVHDARMHGAHTIEINLEPSAVESEFAEKRYGKASIEVPRLVEEILAAQARAKESAA.

The Deacetylase sirtuin-type domain maps to 1-237 (MSLPYRHVVI…PRLVEEILAA (237 aa)). NAD(+) is bound at residue 13-32 (GAGISAESGIQTFRAQDGLW). The substrate site is built by Y57 and R60. 94 to 97 (QNID) provides a ligand contact to NAD(+). Catalysis depends on H112, which acts as the Proton acceptor. Positions 120 and 139 each coordinate Zn(2+). NAD(+) is bound by residues 179 to 181 (GTS), 205 to 207 (NLE), and A223.

Belongs to the sirtuin family. Class III subfamily. The cofactor is Zn(2+).

It localises to the cytoplasm. The enzyme catalyses N(6)-acetyl-L-lysyl-[protein] + NAD(+) + H2O = 2''-O-acetyl-ADP-D-ribose + nicotinamide + L-lysyl-[protein]. It carries out the reaction N(6)-succinyl-L-lysyl-[protein] + NAD(+) + H2O = 2''-O-succinyl-ADP-D-ribose + nicotinamide + L-lysyl-[protein]. NAD-dependent lysine deacetylase and desuccinylase that specifically removes acetyl and succinyl groups on target proteins. Modulates the activities of several proteins which are inactive in their acylated form. This Vibrio cholerae serotype O1 (strain ATCC 39315 / El Tor Inaba N16961) protein is NAD-dependent protein deacylase.